Here is a 186-residue protein sequence, read N- to C-terminus: Ribosome-recycling factor (186 aa).

The protein belongs to the RRF family.

It localises to the cytoplasm. Functionally, responsible for the release of ribosomes from messenger RNA at the termination of protein biosynthesis. May increase the efficiency of translation by recycling ribosomes from one round of translation to another. This chain is Ribosome-recycling factor, found in Rickettsia peacockii (strain Rustic).